An 88-amino-acid chain; its full sequence is Cytochrome c oxidase subunit 6B2 (88 aa).

In terms of domain architecture, CHCH spans 29-75 (TRNCYQNFLDYHRCIKTMNRRGKSTQPCEYYFRVYHSLCPISWVQRW). Residues 32 to 42 (CYQNFLDYHRC) carry the Cx9C motif motif. 2 disulfides stabilise this stretch: Cys32–Cys67 and Cys42–Cys56. The Cx10C motif signature appears at 56 to 67 (CEYYFRVYHSLC).

It belongs to the cytochrome c oxidase subunit 6B family. As to quaternary structure, component of the cytochrome c oxidase (complex IV, CIV), a multisubunit enzyme composed of 14 subunits. The complex is composed of a catalytic core of 3 subunits MT-CO1, MT-CO2 and MT-CO3, encoded in the mitochondrial DNA, and 11 supernumerary subunits COX4I1 (or COX4I2), COX5A, COX5B, COX6A2 (or COX6A1), COX6B1 (or COX6B2), COX6C, COX7A1 (or COX7A2), COX7B, COX7C, COX8B and NDUFA4, which are encoded in the nuclear genome. The complex exists as a monomer or a dimer and forms supercomplexes (SCs) in the inner mitochondrial membrane with NADH-ubiquinone oxidoreductase (complex I, CI) and ubiquinol-cytochrome c oxidoreductase (cytochrome b-c1 complex, complex III, CIII), resulting in different assemblies (supercomplex SCI(1)III(2)IV(1) and megacomplex MCI(2)III(2)IV(2)). Testis specific.

It is found in the mitochondrion inner membrane. It participates in energy metabolism; oxidative phosphorylation. In terms of biological role, component of the cytochrome c oxidase, the last enzyme in the mitochondrial electron transport chain which drives oxidative phosphorylation. The respiratory chain contains 3 multisubunit complexes succinate dehydrogenase (complex II, CII), ubiquinol-cytochrome c oxidoreductase (cytochrome b-c1 complex, complex III, CIII) and cytochrome c oxidase (complex IV, CIV), that cooperate to transfer electrons derived from NADH and succinate to molecular oxygen, creating an electrochemical gradient over the inner membrane that drives transmembrane transport and the ATP synthase. Cytochrome c oxidase is the component of the respiratory chain that catalyzes the reduction of oxygen to water. Electrons originating from reduced cytochrome c in the intermembrane space (IMS) are transferred via the dinuclear copper A center (CU(A)) of subunit 2 and heme A of subunit 1 to the active site in subunit 1, a binuclear center (BNC) formed by heme A3 and copper B (CU(B)). The BNC reduces molecular oxygen to 2 water molecules using 4 electrons from cytochrome c in the IMS and 4 protons from the mitochondrial matrix. In Bos taurus (Bovine), this protein is Cytochrome c oxidase subunit 6B2 (COX6B2).